The chain runs to 203 residues: ATP-dependent Clp protease proteolytic subunit (203 aa).

S100 acts as the Nucleophile in catalysis. H125 is an active-site residue.

This sequence belongs to the peptidase S14 family. As to quaternary structure, component of the chloroplastic Clp protease core complex.

It localises to the plastid. The protein resides in the chloroplast stroma. The enzyme catalyses Hydrolysis of proteins to small peptides in the presence of ATP and magnesium. alpha-casein is the usual test substrate. In the absence of ATP, only oligopeptides shorter than five residues are hydrolyzed (such as succinyl-Leu-Tyr-|-NHMec, and Leu-Tyr-Leu-|-Tyr-Trp, in which cleavage of the -Tyr-|-Leu- and -Tyr-|-Trp bonds also occurs).. Functionally, cleaves peptides in various proteins in a process that requires ATP hydrolysis. Has a chymotrypsin-like activity. Plays a major role in the degradation of misfolded proteins. The sequence is that of ATP-dependent Clp protease proteolytic subunit from Dioscorea elephantipes (Elephant's foot yam).